A 397-amino-acid chain; its full sequence is Putative F-box protein At2g04810 (397 aa).

The 49-residue stretch at 20 to 68 folds into the F-box domain; the sequence is SDWSKLCPDVLRKIYETLRSPVDSHRAKIVCSNWYSVWKTCVKRPLCPL.

In Arabidopsis thaliana (Mouse-ear cress), this protein is Putative F-box protein At2g04810.